Consider the following 466-residue polypeptide: Cytochrome P450 85A (466 aa).

A helical membrane pass occupies residues 2–22 (ALFMAILGVLVLLLCLCSALL). Residue cysteine 414 participates in heme binding.

Belongs to the cytochrome P450 family. Requires heme as cofactor.

The protein localises to the membrane. Catalyzes the C6-oxidation step in brassinosteroids biosynthesis. The chain is Cytochrome P450 85A from Phaseolus vulgaris (Kidney bean).